A 392-amino-acid chain; its full sequence is MSFDLAARLAARRAEHLYRQRPLLQSPQGPQVVVDGQPLLAFCNNDYLGLANHPQVIEAWRSGASRWGVGGGASHLVIGHSTPHHALEEALAELTGRPRALLFTTGYMANLGAVTALVGQGDTVLEDRLNHASLLDAGLLSGARFNRYLHNDAHSLAKRLEKATGNTLVVTDGVFSMDGDVADLPALARATKARGAWLMVDDAHGFGPLGANGGGLVEHFGLGLDEVPVLVGTLGKAFGTAGAFVAGSEDLIESLIQFARPYIYTTSQPPALACATLKSLELLRSEHWRREHLAALIRQFRQGAEQIGLQLMDSFTPIQPILVGDSARAVRLSQMLRERGIMVSAIRPPTVPAGSARLRVTLSAAHSEAQVQLLLSALADCFRELQAEPSHA.

Arg-19 is a substrate binding site. Residue Gly-106 to Tyr-107 coordinates pyridoxal 5'-phosphate. His-131 contacts substrate. Positions 176, 204, and 233 each coordinate pyridoxal 5'-phosphate. N6-(pyridoxal phosphate)lysine is present on Lys-236. Thr-350 contributes to the substrate binding site.

The protein belongs to the class-II pyridoxal-phosphate-dependent aminotransferase family. BioF subfamily. As to quaternary structure, homodimer. It depends on pyridoxal 5'-phosphate as a cofactor.

It catalyses the reaction 6-carboxyhexanoyl-[ACP] + L-alanine + H(+) = (8S)-8-amino-7-oxononanoate + holo-[ACP] + CO2. The protein operates within cofactor biosynthesis; biotin biosynthesis. Catalyzes the decarboxylative condensation of pimeloyl-[acyl-carrier protein] and L-alanine to produce 8-amino-7-oxononanoate (AON), [acyl-carrier protein], and carbon dioxide. This chain is 8-amino-7-oxononanoate synthase, found in Pseudomonas fluorescens (strain ATCC BAA-477 / NRRL B-23932 / Pf-5).